A 612-amino-acid polypeptide reads, in one-letter code: Threonine--tRNA ligase (612 aa).

The tract at residues Asp-218 to Pro-509 is catalytic. Zn(2+) is bound by residues Cys-310, His-361, and His-486.

This sequence belongs to the class-II aminoacyl-tRNA synthetase family. In terms of assembly, homodimer. Zn(2+) serves as cofactor.

It is found in the cytoplasm. The catalysed reaction is tRNA(Thr) + L-threonine + ATP = L-threonyl-tRNA(Thr) + AMP + diphosphate + H(+). Its function is as follows. Catalyzes the attachment of threonine to tRNA(Thr) in a two-step reaction: L-threonine is first activated by ATP to form Thr-AMP and then transferred to the acceptor end of tRNA(Thr). Also edits incorrectly charged L-seryl-tRNA(Thr). The polypeptide is Threonine--tRNA ligase (Helicobacter pylori (strain J99 / ATCC 700824) (Campylobacter pylori J99)).